Here is a 71-residue protein sequence, read N- to C-terminus: MQKLIILLLVAAVLMSTQALFQEKRPMKKINFLSKGKTDAEKQRKRSCSDDWQYCEYPHDCCSWSCDVVCS.

Positions 1–19 are cleaved as a signal peptide; the sequence is MQKLIILLLVAAVLMSTQA. Positions 20 to 43 are excised as a propeptide; the sequence is LFQEKRPMKKINFLSKGKTDAEKQ. 3 cysteine pairs are disulfide-bonded: cysteine 48/cysteine 62, cysteine 55/cysteine 66, and cysteine 61/cysteine 70.

It belongs to the conotoxin O2 superfamily. Expressed by the venom duct.

It localises to the secreted. Its function is as follows. Inhibits voltage-gated ion channels. The polypeptide is Conotoxin Vc6.12 (Conus victoriae (Queen Victoria cone)).